Consider the following 212-residue polypeptide: MHPFLQELKQGSQALGLDLSDEVLGLLLKYQDALVLWNKAYNLTAIRDPKEMLVKHLLDSLSILKDLPQGRLLDVGTGGGMPGMIIALCQPERNCVLLDSNGKKIRFLKQFIADLKLKNVVAVQTRVENEESIQELGKFDVITSRAFASLLDFVDAARPYMYESTIIAAMKGLVPTEEMQQLKAEFSCQVIGLQVPRLDEQRHLLLLQQIKN.

S-adenosyl-L-methionine-binding positions include Gly-76, Met-81, 127–128 (VE), and Arg-145.

The protein belongs to the methyltransferase superfamily. RNA methyltransferase RsmG family.

The protein resides in the cytoplasm. The enzyme catalyses guanosine(527) in 16S rRNA + S-adenosyl-L-methionine = N(7)-methylguanosine(527) in 16S rRNA + S-adenosyl-L-homocysteine. Functionally, specifically methylates the N7 position of guanine in position 527 of 16S rRNA. The polypeptide is Ribosomal RNA small subunit methyltransferase G (Acinetobacter baylyi (strain ATCC 33305 / BD413 / ADP1)).